Reading from the N-terminus, the 89-residue chain is Small ribosomal subunit protein uS15 (89 aa).

The protein belongs to the universal ribosomal protein uS15 family. Part of the 30S ribosomal subunit. Forms a bridge to the 50S subunit in the 70S ribosome, contacting the 23S rRNA.

In terms of biological role, one of the primary rRNA binding proteins, it binds directly to 16S rRNA where it helps nucleate assembly of the platform of the 30S subunit by binding and bridging several RNA helices of the 16S rRNA. Its function is as follows. Forms an intersubunit bridge (bridge B4) with the 23S rRNA of the 50S subunit in the ribosome. This is Small ribosomal subunit protein uS15 from Staphylococcus saprophyticus subsp. saprophyticus (strain ATCC 15305 / DSM 20229 / NCIMB 8711 / NCTC 7292 / S-41).